Reading from the N-terminus, the 439-residue chain is Histidine--tRNA ligase (439 aa).

This sequence belongs to the class-II aminoacyl-tRNA synthetase family. As to quaternary structure, homodimer.

Its subcellular location is the cytoplasm. The enzyme catalyses tRNA(His) + L-histidine + ATP = L-histidyl-tRNA(His) + AMP + diphosphate + H(+). The protein is Histidine--tRNA ligase of Leptospira borgpetersenii serovar Hardjo-bovis (strain L550).